A 388-amino-acid polypeptide reads, in one-letter code: FMRFamide neuropeptides (388 aa).

The N-terminal stretch at Met-1–Ala-21 is a signal peptide. A propeptide spanning residues Tyr-22–Arg-172 is cleaved from the precursor. The disordered stretch occupies residues Phe-40–Leu-74. Polar residues predominate over residues Leu-64–Leu-74. 17 positions are modified to phenylalanine amide: Phe-179, Phe-196, Phe-208, Phe-219, Phe-230, Phe-241, Phe-253, Phe-265, Phe-277, Phe-289, Phe-301, Phe-313, Phe-325, Phe-337, Phe-346, Phe-359, and Phe-372. The disordered stretch occupies residues Gly-360–Lys-388. Residues Lys-374–Lys-388 are compositionally biased toward basic and acidic residues. Residues Ser-375–Lys-388 constitute a propeptide that is removed on maturation.

Belongs to the FARP (FMRFamide related peptide) family. In the brain, expressed in 2 large cells in the lateral neurons in each optic lobe, 2 slightly bigger cells on both sides of the tritocerebrum, around 14 small cells in the dorsal area, around 13 cells in the subesophageal ganglion, and in the central brain.

The protein localises to the secreted. This chain is FMRFamide neuropeptides, found in Musca domestica (House fly).